Here is a 144-residue protein sequence, read N- to C-terminus: 3-dehydroquinate dehydratase (144 aa).

The Proton acceptor role is filled by Tyr24. Substrate contacts are provided by Asn76, His82, and Asp89. His102 functions as the Proton donor in the catalytic mechanism. Residues 103 to 104 and Arg113 contribute to the substrate site; that span reads LS.

Belongs to the type-II 3-dehydroquinase family. As to quaternary structure, homododecamer.

It catalyses the reaction 3-dehydroquinate = 3-dehydroshikimate + H2O. It participates in metabolic intermediate biosynthesis; chorismate biosynthesis; chorismate from D-erythrose 4-phosphate and phosphoenolpyruvate: step 3/7. Catalyzes a trans-dehydration via an enolate intermediate. The protein is 3-dehydroquinate dehydratase of Bordetella bronchiseptica (strain ATCC BAA-588 / NCTC 13252 / RB50) (Alcaligenes bronchisepticus).